Reading from the N-terminus, the 1491-residue chain is Copper-transporting ATPase 1 (1491 aa).

The Cytoplasmic segment spans residues 1–644; the sequence is MEPSVDANSI…KREIKQWRGS (644 aa). HMA domains follow at residues 8-74 and 85-151; these read NSIT…FDAL and TNTV…LDMG. The Cu(+) site is built by Thr18, Cys19, and Cys22. Phosphothreonine is present on Thr152. In terms of domain architecture, HMA 3 spans 171–237; it reads VMLKMKVEGM…QIEAVGFPAF (67 aa). Positions 182 and 185 each coordinate Cu(+). Position 270 is a phosphoserine (Ser270). Positions 277–343 constitute an HMA 4 domain; it reads STTMFTIEGM…AIEAISPGQY (67 aa). Cys288 and Cys291 together coordinate Cu(+). Position 327 is a phosphothreonine (Thr327). Ser339, Ser353, Ser357, and Ser362 each carry phosphoserine. 3 HMA domains span residues 377–443, 479–545, and 555–621; these read QEAV…FDAA, NKCY…FGAM, and GILE…FEAS. Residues Cys388, Cys391, Cys490, Cys493, Cys566, and Cys569 each coordinate Cu(+). A helical membrane pass occupies residues 645–666; the sequence is FLVSLFFCIPVMGLMVYMMVMD. The Extracellular portion of the chain corresponds to 667–705; that stretch reads HHLATLHHNQNMSNEEMINMHSAMFLERQILPGLSIMNL. An N-linked (GlcNAc...) asparagine glycan is attached at Asn677. Residues 706-725 form a helical membrane-spanning segment; that stretch reads LSLLLCLPVQFCGGWYFYIQ. Residues 726-732 are Cytoplasmic-facing; the sequence is AYKALKH. A helical transmembrane segment spans residues 733-753; it reads KTANMDVLIVLATTIAFAYSL. At 754–772 the chain is on the extracellular side; that stretch reads VILLVAMFERAKVNPITFF. Residues 773-793 traverse the membrane as a helical segment; that stretch reads DTPPMLFVFIALGRWLEHIAK. Over 794-926 the chain is Cytoplasmic; that stretch reads GKTSEALAKL…SKAPIQQFAD (133 aa). The helical transmembrane segment at 927-950 threads the bilayer; it reads KLSGYFVPFIVLVSIVTLLVWIII. The Extracellular portion of the chain corresponds to 951 to 980; it reads GFQNFEIVETYFPGYNRSISRTETIIRFAF. N-linked (GlcNAc...) asparagine glycosylation occurs at Asn966. The helical transmembrane segment at 981-1002 threads the bilayer; that stretch reads QASITVLCIACPCSLGLATPTA. Residues 1003-1347 are Cytoplasmic-facing; that stretch reads VMVGTGVGAQ…LSRKTVKRIR (345 aa). Residue Asp1035 is the 4-aspartylphosphate intermediate of the active site. Glu1072 lines the ATP pocket. Thr1203 carries the phosphothreonine modification. Residues Asp1292 and Asp1296 each coordinate Mg(2+). The helical transmembrane segment at 1348–1365 threads the bilayer; sequence INFVFALIYNLVGIPIAA. Residues 1366–1376 lie on the Extracellular side of the membrane; sequence GVFLPIGLVLQ. A helical membrane pass occupies residues 1377 to 1396; the sequence is PWMGSAAMAASSVSVVLSSL. Residues 1397–1491 lie on the Cytoplasmic side of the membrane; sequence FLKLYRKPTY…DFREDDDTTL (95 aa). Phosphoserine is present on residues Ser1421, Ser1423, Ser1451, Ser1454, and Ser1457. The Endocytosis signal signature appears at 1458–1459; the sequence is LL. A phosphoserine mark is found at Ser1460, Ser1464, Ser1467, and Ser1477. Positions 1477 to 1491 are PDZD11-binding; that stretch reads SLLVGDFREDDDTTL. The Endocytosis signal signature appears at 1478 to 1479; it reads LL.

This sequence belongs to the cation transport ATPase (P-type) (TC 3.A.3) family. Type IB subfamily. In terms of assembly, monomer. Interacts with PDZD11. Interacts with ATOX1 and COMMD1. Interacts with TYRP1. Directly interacts with SOD3; this interaction is copper-dependent and is required for SOD3 activity. As to expression, widely expressed. Highly expressed in pituitary endocrine cells. Expressed in melanocytes (at protein level). Expressed in motor neuron (at protein level). Expressed in hippocampal neuron (at protein level). In the kidney, it is detected in the proximal and distal tubules (at protein level). Expressed in aorta (at protein level).

The protein resides in the golgi apparatus. Its subcellular location is the trans-Golgi network membrane. The protein localises to the cell membrane. It localises to the melanosome membrane. It is found in the early endosome membrane. The protein resides in the cell projection. Its subcellular location is the axon. The protein localises to the dendrite. It localises to the postsynaptic density. It catalyses the reaction Cu(+)(in) + ATP + H2O = Cu(+)(out) + ADP + phosphate + H(+). In terms of biological role, ATP-driven copper (Cu(+)) ion pump that plays an important role in intracellular copper ion homeostasis. Within a catalytic cycle, acquires Cu(+) ion from donor protein on the cytoplasmic side of the membrane and delivers it to acceptor protein on the lumenal side. The transfer of Cu(+) ion across the membrane is coupled to ATP hydrolysis and is associated with a transient phosphorylation that shifts the pump conformation from inward-facing to outward-facing state. Under physiological conditions, at low cytosolic copper concentration, it is localized at the trans-Golgi network (TGN) where it transfers Cu(+) ions to cuproenzymes of the secretory pathway. Upon elevated cytosolic copper concentrations, it relocalizes to the plasma membrane where it is responsible for the export of excess Cu(+) ions. May play a dual role in neuron function and survival by regulating cooper efflux and neuronal transmission at the synapse as well as by supplying Cu(+) ions to enzymes such as PAM, TYR and SOD3. In the melanosomes of pigmented cells, provides copper cofactor to TYR to form an active TYR holoenzyme for melanin biosynthesis. The polypeptide is Copper-transporting ATPase 1 (Mus musculus (Mouse)).